The primary structure comprises 193 residues: Coiled-coil domain-containing protein 184 (193 aa).

The stretch at 39 to 68 (GMKELMEHLKAQLQALFEDVRAMRGALDEQ) forms a coiled coil. The segment at 101 to 176 (GLGVAGGKGS…LGENGPLVEP (76 aa)) is disordered. Over residues 135 to 146 (PDEEDEEEEEEK) the composition is skewed to acidic residues.

The sequence is that of Coiled-coil domain-containing protein 184 (Ccdc184) from Rattus norvegicus (Rat).